A 153-amino-acid polypeptide reads, in one-letter code: NAD(P)H-quinone oxidoreductase subunit N (153 aa).

This sequence belongs to the complex I NdhN subunit family. NDH-1 can be composed of about 15 different subunits; different subcomplexes with different compositions have been identified which probably have different functions.

Its subcellular location is the cellular thylakoid membrane. It catalyses the reaction a plastoquinone + NADH + (n+1) H(+)(in) = a plastoquinol + NAD(+) + n H(+)(out). The catalysed reaction is a plastoquinone + NADPH + (n+1) H(+)(in) = a plastoquinol + NADP(+) + n H(+)(out). In terms of biological role, NDH-1 shuttles electrons from an unknown electron donor, via FMN and iron-sulfur (Fe-S) centers, to quinones in the respiratory and/or the photosynthetic chain. The immediate electron acceptor for the enzyme in this species is believed to be plastoquinone. Couples the redox reaction to proton translocation, and thus conserves the redox energy in a proton gradient. Cyanobacterial NDH-1 also plays a role in inorganic carbon-concentration. In Prochlorococcus marinus (strain MIT 9211), this protein is NAD(P)H-quinone oxidoreductase subunit N.